The chain runs to 110 residues: Small ribosomal subunit protein bS16 (110 aa).

Positions 81–104 are enriched in basic and acidic residues; the sequence is VRPAEVLGKQKQEKERSAKKKDAA. The interval 81-110 is disordered; sequence VRPAEVLGKQKQEKERSAKKKDAAASETSE.

It belongs to the bacterial ribosomal protein bS16 family.

The polypeptide is Small ribosomal subunit protein bS16 (Prochlorococcus marinus (strain NATL2A)).